Here is a 327-residue protein sequence, read N- to C-terminus: MSKSTPLKSSIIRADLPEQAEGRTGPETGKDPEKTGNSEGKTDTPVIEIKDLCHRYPHLEANALDRINLRIYRGERVAVLGANGAGKSTLFKHLNGILRPLSGEVLVKGEKITKKNVRMCRGTVGIVFQDPDDQVLAPSVEEDVAFGPINMGLSREEVKMRVKEALEMVGLNGFEERAPHHLSGGQKKLVAIAGILAMRPEVIVLDEPTAGLDPLSSARVLKLITKMNRELGITLLLSTHDVDVVPYFAERVFVLHHGKLEASGSPEEIFNDPALLRKAHLRLPRVAEVFEMLKQEGVDVNIQITAETARDEILRVIRSENRKAEMK.

A disordered region spans residues 1 to 44; the sequence is MSKSTPLKSSIIRADLPEQAEGRTGPETGKDPEKTGNSEGKTDT. Residues 28–44 are compositionally biased toward basic and acidic residues; it reads TGKDPEKTGNSEGKTDT. Residues 47–282 enclose the ABC transporter domain; that stretch reads IEIKDLCHRY…PALLRKAHLR (236 aa). 81 to 88 is a binding site for ATP; it reads GANGAGKS.

Belongs to the ABC transporter superfamily.

The protein resides in the cell membrane. Probably part of an ABC transporter complex. Responsible for energy coupling to the transport system. This chain is Putative ABC transporter ATP-binding protein MM_0887, found in Methanosarcina mazei (strain ATCC BAA-159 / DSM 3647 / Goe1 / Go1 / JCM 11833 / OCM 88) (Methanosarcina frisia).